The chain runs to 119 residues: Large ribosomal subunit protein uL22 (119 aa).

It belongs to the universal ribosomal protein uL22 family. Part of the 50S ribosomal subunit.

This protein binds specifically to 23S rRNA; its binding is stimulated by other ribosomal proteins, e.g. L4, L17, and L20. It is important during the early stages of 50S assembly. It makes multiple contacts with different domains of the 23S rRNA in the assembled 50S subunit and ribosome. In terms of biological role, the globular domain of the protein is located near the polypeptide exit tunnel on the outside of the subunit, while an extended beta-hairpin is found that lines the wall of the exit tunnel in the center of the 70S ribosome. The chain is Large ribosomal subunit protein uL22 from Rickettsia akari (strain Hartford).